The sequence spans 205 residues: Holliday junction branch migration complex subunit RuvA (205 aa).

The interval 1 to 65 (MIGRLRGAVA…SAGLRLYGFL (65 aa)) is domain I. The segment at 66–144 (TREDRRAFVL…TDGPVLMSAP (79 aa)) is domain II. Residues 145–153 (TSSAPSAPA) form a flexible linker region. A domain III region spans residues 153–205 (AKPAPTGDAVAALMGLGVAEVNARRVVEAAAAELGEEATVQALIKAGLKELGR).

This sequence belongs to the RuvA family. In terms of assembly, homotetramer. Forms an RuvA(8)-RuvB(12)-Holliday junction (HJ) complex. HJ DNA is sandwiched between 2 RuvA tetramers; dsDNA enters through RuvA and exits via RuvB. An RuvB hexamer assembles on each DNA strand where it exits the tetramer. Each RuvB hexamer is contacted by two RuvA subunits (via domain III) on 2 adjacent RuvB subunits; this complex drives branch migration. In the full resolvosome a probable DNA-RuvA(4)-RuvB(12)-RuvC(2) complex forms which resolves the HJ.

The protein resides in the cytoplasm. Its function is as follows. The RuvA-RuvB-RuvC complex processes Holliday junction (HJ) DNA during genetic recombination and DNA repair, while the RuvA-RuvB complex plays an important role in the rescue of blocked DNA replication forks via replication fork reversal (RFR). RuvA specifically binds to HJ cruciform DNA, conferring on it an open structure. The RuvB hexamer acts as an ATP-dependent pump, pulling dsDNA into and through the RuvAB complex. HJ branch migration allows RuvC to scan DNA until it finds its consensus sequence, where it cleaves and resolves the cruciform DNA. The chain is Holliday junction branch migration complex subunit RuvA from Caulobacter vibrioides (strain ATCC 19089 / CIP 103742 / CB 15) (Caulobacter crescentus).